A 557-amino-acid polypeptide reads, in one-letter code: Anthrax toxin receptor-like (557 aa).

The first 25 residues, 1–25, serve as a signal peptide directing secretion; that stretch reads MRSHGRWGPCFLLFLLLLPPPLFRA. Residues 26–345 are Extracellular-facing; sequence GSLRYHGPGW…KSNVSVTSST (320 aa). In terms of domain architecture, VWFA spans 74–244; it reads DLYFILDKSG…KAMRDTVDAL (171 aa). The a divalent metal cation site is built by S82, S84, and T148. A helical transmembrane segment spans residues 346–366; that stretch reads CGIFSNWLYFLLPLLLLPLLL. The Cytoplasmic portion of the chain corresponds to 367–557; sequence CCLWRLCRKK…PTSKAPNTQD (191 aa). Disordered stretches follow at residues 380-411 and 497-557; these read EPPP…LPPP and ESPS…NTQD. Residues 386–395 are compositionally biased toward basic and acidic residues; sequence KPEKEPEQEK. Residues 396-411 show a composition bias toward pro residues; it reads PPPPPPPSPPPPLPPP. Over residues 534–557 the composition is skewed to polar residues; sequence GTLQNPLCPSLPRSPTSKAPNTQD.

The protein belongs to the ATR family.

It localises to the membrane. This chain is Anthrax toxin receptor-like (ANTXRL), found in Macaca fascicularis (Crab-eating macaque).